The chain runs to 163 residues: Nitrogen regulatory protein (163 aa).

Positions S12–T156 constitute a PTS EIIA type-2 domain. H73 (tele-phosphohistidine intermediate) is an active-site residue.

Its subcellular location is the cytoplasm. Seems to have a role in regulating nitrogen assimilation. This is Nitrogen regulatory protein (ptsN) from Escherichia coli (strain K12).